The chain runs to 436 residues: POU domain, class 2, transcription factor 3 (436 aa).

Disordered regions lie at residues 1-40 (MVNL…NGLD), 140-186 (QTGP…DEPS), and 256-278 (AESS…SEVF). Positions 183–257 (DEPSDLEELE…LLEKWLNDAE (75 aa)) constitute a POU-specific domain. Over residues 258–275 (SSPSDPSVSTPSSYPSLS) the composition is skewed to low complexity. Positions 281–340 (KRKKRTSIETNIRLTLEKRFQDNPKPSSEEISMIAEQLSMEKEVVRVWFCNRRQKEKRIN) form a DNA-binding region, homeobox. Residues 363–421 (LGPLSVPPVHSTMPGTVTSSCSPGNNSRPSSPGSGLHASSPTASQNNSKAAVNSASSFN) are disordered. 2 stretches are compositionally biased toward low complexity: residues 381-397 (SSCS…PGSG) and 405-421 (ASQN…SSFN).

Belongs to the POU transcription factor family. Class-2 subfamily. As to quaternary structure, interacts (via the POU domain) with POU2AF1 and POU2AF2 in a DNA-dependent manner; this interaction recruits POU2AF2 to chromatin and increases POU2F3 transactivation activity. Specifically expressed in epidermis and cultured keratinocytes.

It is found in the nucleus. Functionally, transcription factor that binds to the octamer motif (5'-ATTTGCAT-3') and regulates cell type-specific differentiation pathways. Involved in the regulation of keratinocytes differentiation. The POU2F3-POU2AF2/POU2AF3 complex drives the expression of tuft-cell-specific genes, a rare chemosensory cells that coordinate immune and neural functions within mucosal epithelial tissues. The chain is POU domain, class 2, transcription factor 3 from Homo sapiens (Human).